Consider the following 102-residue polypeptide: Small ribosomal subunit protein uS10 (102 aa).

Belongs to the universal ribosomal protein uS10 family. As to quaternary structure, part of the 30S ribosomal subunit.

Involved in the binding of tRNA to the ribosomes. This is Small ribosomal subunit protein uS10 from Pyrococcus abyssi (strain GE5 / Orsay).